The primary structure comprises 100 residues: Urease subunit gamma (100 aa).

It belongs to the urease gamma subunit family. Heterotrimer of UreA (gamma), UreB (beta) and UreC (alpha) subunits. Three heterotrimers associate to form the active enzyme.

It is found in the cytoplasm. The enzyme catalyses urea + 2 H2O + H(+) = hydrogencarbonate + 2 NH4(+). The protein operates within nitrogen metabolism; urea degradation; CO(2) and NH(3) from urea (urease route): step 1/1. The sequence is that of Urease subunit gamma from Cupriavidus pinatubonensis (strain JMP 134 / LMG 1197) (Cupriavidus necator (strain JMP 134)).